We begin with the raw amino-acid sequence, 581 residues long: Glutamyl-tRNA reductase (581 aa).

Substrate contacts are provided by residues 49–52 (TCNR), serine 109, 114–116 (EGQ), and glutamine 120. Catalysis depends on cysteine 50, which acts as the Nucleophile. Residue 192-197 (GAGSMS) coordinates NADP(+). The tract at residues 292–416 (PAVEDTAVQE…AEAPRPQPVL (125 aa)) is insert.

It belongs to the glutamyl-tRNA reductase family. As to quaternary structure, homodimer.

It carries out the reaction (S)-4-amino-5-oxopentanoate + tRNA(Glu) + NADP(+) = L-glutamyl-tRNA(Glu) + NADPH + H(+). It participates in porphyrin-containing compound metabolism; protoporphyrin-IX biosynthesis; 5-aminolevulinate from L-glutamyl-tRNA(Glu): step 1/2. In terms of biological role, catalyzes the NADPH-dependent reduction of glutamyl-tRNA(Glu) to glutamate 1-semialdehyde (GSA). This chain is Glutamyl-tRNA reductase, found in Streptomyces coelicolor (strain ATCC BAA-471 / A3(2) / M145).